Consider the following 283-residue polypeptide: Protein canopy homolog 3 (283 aa).

The first 35 residues, 1 to 35, serve as a signal peptide directing secretion; the sequence is MEPLPEPTSRPRLRPRPRCLLLLPLLLLLLLLLPA. One can recognise a Saposin B-type domain in the interval 55 to 276; sequence SKCEVCKYVA…EGIQKASPLT (222 aa). Asparagine 161 is a glycosylation site (N-linked (GlcNAc...) asparagine). Positions 161–187 form a coiled coil; sequence NETSAEVADLKKQCDVLVEEFEEVIED. The segment at 223-283 is disordered; sequence KGDTAALGGK…PLTHSPPDEL (61 aa).

Belongs to the canopy family. Interacts with HSP90B1; this interaction is disrupted in the presence of ATP. Interacts with TLR1, TLR2, TLR4 and TLR9.

The protein localises to the endoplasmic reticulum. Functionally, toll-like receptor (TLR)-specific co-chaperone for HSP90B1. Required for proper TLR folding, except that of TLR3, and hence controls TLR exit from the endoplasmic reticulum. Consequently, required for both innate and adaptive immune responses. This is Protein canopy homolog 3 (CNPY3) from Sus scrofa (Pig).